A 495-amino-acid polypeptide reads, in one-letter code: ATP synthase subunit beta, chloroplastic (495 aa).

172 to 179 is a binding site for ATP; it reads GGAGVGKT.

It belongs to the ATPase alpha/beta chains family. F-type ATPases have 2 components, CF(1) - the catalytic core - and CF(0) - the membrane proton channel. CF(1) has five subunits: alpha(3), beta(3), gamma(1), delta(1), epsilon(1). CF(0) has four main subunits: a(1), b(1), b'(1) and c(9-12).

The protein resides in the plastid. Its subcellular location is the chloroplast thylakoid membrane. The catalysed reaction is ATP + H2O + 4 H(+)(in) = ADP + phosphate + 5 H(+)(out). Its function is as follows. Produces ATP from ADP in the presence of a proton gradient across the membrane. The catalytic sites are hosted primarily by the beta subunits. The protein is ATP synthase subunit beta, chloroplastic of Convallaria majalis (Lily of the valley).